The following is a 76-amino-acid chain: Sec-independent protein translocase protein TatA (76 aa).

Residues 1-21 traverse the membrane as a helical segment; sequence MLGGLTGWHLLIILAVILLLF. A compositionally biased stretch (basic and acidic residues) spans 44–57; that stretch reads VNEMKKDGDKDKGE. The tract at residues 44 to 76 is disordered; the sequence is VNEMKKDGDKDKGEGGSTAPATDTGASSEQNSK. A compositionally biased stretch (polar residues) spans 62 to 76; it reads APATDTGASSEQNSK.

This sequence belongs to the TatA/E family. The Tat system comprises two distinct complexes: a TatABC complex, containing multiple copies of TatA, TatB and TatC subunits, and a separate TatA complex, containing only TatA subunits. Substrates initially bind to the TatABC complex, which probably triggers association of the separate TatA complex to form the active translocon.

It is found in the cell membrane. Functionally, part of the twin-arginine translocation (Tat) system that transports large folded proteins containing a characteristic twin-arginine motif in their signal peptide across membranes. TatA could form the protein-conducting channel of the Tat system. The protein is Sec-independent protein translocase protein TatA of Leifsonia xyli subsp. xyli (strain CTCB07).